Reading from the N-terminus, the 307-residue chain is Ribosomal RNA small subunit methyltransferase H (307 aa).

S-adenosyl-L-methionine contacts are provided by residues 34–36 (GGH), Asp53, Leu88, Asp102, and Gln109.

It belongs to the methyltransferase superfamily. RsmH family.

The protein localises to the cytoplasm. It carries out the reaction cytidine(1402) in 16S rRNA + S-adenosyl-L-methionine = N(4)-methylcytidine(1402) in 16S rRNA + S-adenosyl-L-homocysteine + H(+). Its function is as follows. Specifically methylates the N4 position of cytidine in position 1402 (C1402) of 16S rRNA. This Sulfurimonas denitrificans (strain ATCC 33889 / DSM 1251) (Thiomicrospira denitrificans (strain ATCC 33889 / DSM 1251)) protein is Ribosomal RNA small subunit methyltransferase H.